The primary structure comprises 48 residues: Osteocalcin (48 aa).

The 46-residue stretch at 1–46 (SFAVGSSYGAAPDPLEAQREVCELNPDCDELADHIGFQEAYRRFYG) folds into the Gla domain. Positions 16, 20, 23, and 29 each coordinate Ca(2+). 4-carboxyglutamate occurs at positions 16, 20, and 23. C22 and C28 are joined by a disulfide.

It belongs to the osteocalcin/matrix Gla protein family. In terms of processing, gamma-carboxyglutamate residues are formed by vitamin K dependent carboxylation by GGCX. These residues are essential for the binding of calcium.

It is found in the secreted. The carboxylated form is one of the main organic components of the bone matrix, which constitutes 1-2% of the total bone protein. The carboxylated form binds strongly to apatite and calcium. This is Osteocalcin (BGLAP) from Dromaius novaehollandiae (Emu).